The chain runs to 103 residues: Small ribosomal subunit protein uS14c (103 aa).

The disordered stretch occupies residues 34–56; the sequence is KVSPLSLSEKTKMREKLQSLPRN.

The protein belongs to the universal ribosomal protein uS14 family. As to quaternary structure, part of the 30S ribosomal subunit.

The protein resides in the plastid. It is found in the chloroplast. Binds 16S rRNA, required for the assembly of 30S particles. The sequence is that of Small ribosomal subunit protein uS14c from Triticum aestivum (Wheat).